A 380-amino-acid polypeptide reads, in one-letter code: Protein neprosin (380 aa).

The signal sequence occupies residues 1-24 (MQAKFFTFVILSSVFYFNYPLAEA). The propeptide at 25 to 128 (RSIQARLANK…QFPNLKFAPP (104 aa)) is activation peptide. A disulfide bridge links cysteine 52 with cysteine 98. N-linked (GlcNAc...) asparagine glycosylation is found at asparagine 68, asparagine 145, and asparagine 152. In terms of domain architecture, Neprosin PEP catalytic spans 129-380 (SANTNHQYAV…YLFYGGPGCQ (252 aa)). Glutamate 188 is an active-site residue. A disulfide bond links cysteine 219 and cysteine 224. Residue asparagine 253 is glycosylated (N-linked (GlcNAc...) asparagine). Glutamate 297 is an active-site residue. Residues cysteine 358 and cysteine 379 are joined by a disulfide bond.

It belongs to the peptidase G3 family.

The protein localises to the secreted. The enzyme catalyses Hydrolysis of Pro-|-Xaa &gt;&gt; Ala-|-Xaa in oligopeptides.. With respect to regulation, weakly inhibited by the aspartic protease inhibitor pepstatin. Weakly inhibited by pepstatin A (IC(50) of 140 uM) and 1,2-epoxy-3-(p-nitrophenoxy)propane (EPNP) (IC(50) of 480 uM). Activity is not affected by the POP inhibitor Z-Pro-prolinal inhibitor or the denaturant urea. Functionally, glutamic endopeptidase that preferentially cleaves peptide bonds on the C-terminal side of proline residues. Also cleaves peptide bonds on the C-terminal side of alanine residues but with less efficiency. In contrast to most proline-cleaving enzymes, effectively degrades proteins of any size. Found in the viscoelastic fluid of the pitcher, and so likely functions in the digestion of their prey. The protein is Protein neprosin of Nepenthes x ventrata (Red tropical pitcher plant).